Here is a 1177-residue protein sequence, read N- to C-terminus: Lysylphosphatidylglycerol biosynthesis bifunctional protein LysX (1177 aa).

2 disordered regions span residues 1–40 (MRRA…AKFV) and 61–85 (VTLA…PRNR). The tract at residues 1–676 (MRRAGRSRQF…LLHHDGSAPD (676 aa)) is phosphatidylglycerol lysyltransferase. Residues 65-85 (SPGSRSGSGPRSGPRLGPRNR) are compositionally biased toward low complexity. 6 helical membrane passes run 93 to 113 (VPAA…LGSV), 135 to 155 (FPDT…ALTA), 159 to 179 (IAWL…VADI), 189 to 209 (IFGE…LVLA), 227 to 247 (AVLV…VELF), and 281 to 301 (VFLN…ATIV). The segment at 673–693 (SAPDVSGLRPERTDAEEARSR) is disordered. The lysine--tRNA ligase stretch occupies residues 677–1177 (VSGLRPERTD…TLPFPLAKPH (501 aa)). Basic and acidic residues predominate over residues 681–693 (RPERTDAEEARSR). A DNA-binding region (OB) is located at residues 738 to 816 (ITVAGRILRI…SLIVTDWRMI (79 aa)). Mg(2+) contacts are provided by Asp-1089 and Glu-1096.

This sequence in the N-terminal section; belongs to the LPG synthetase family. The protein in the C-terminal section; belongs to the class-II aminoacyl-tRNA synthetase family. Requires Mg(2+) as cofactor.

It localises to the cell membrane. The enzyme catalyses tRNA(Lys) + L-lysine + ATP = L-lysyl-tRNA(Lys) + AMP + diphosphate. It carries out the reaction L-lysyl-tRNA(Lys) + a 1,2-diacyl-sn-glycero-3-phospho-(1'-sn-glycerol) = a 1,2-diacyl-sn-glycero-3-phospho-1'-(3'-O-L-lysyl)-sn-glycerol + tRNA(Lys). Functionally, catalyzes the production of L-lysyl-tRNA(Lys)transfer and the transfer of a lysyl group from L-lysyl-tRNA(Lys) to membrane-bound phosphatidylglycerol (PG), which produces lysylphosphatidylglycerol (LPG), one of the components of the bacterial membrane with a positive net charge. LPG synthesis contributes to the resistance to cationic antimicrobial peptides (CAMPs) and likely protects M.tuberculosis against the CAMPs produced by competiting microorganisms (bacteriocins). In fact, the modification of anionic phosphatidylglycerol with positively charged L-lysine results in repulsion of the peptides. The protein is Lysylphosphatidylglycerol biosynthesis bifunctional protein LysX (lysX) of Mycolicibacterium paratuberculosis (strain ATCC BAA-968 / K-10) (Mycobacterium paratuberculosis).